We begin with the raw amino-acid sequence, 289 residues long: Glucosamine-6-phosphate deaminase 1 (289 aa).

Asp-72 serves as the catalytic Proton acceptor; for enolization step. Residue Asp-141 is the For ring-opening step of the active site. The Proton acceptor; for ring-opening step role is filled by His-143. Glu-148 (for ring-opening step) is an active-site residue. Phosphothreonine is present on Thr-161.

This sequence belongs to the glucosamine/galactosamine-6-phosphate isomerase family. Homohexamer. In terms of tissue distribution, widely expressed. Detected in brain, liver, kidney, muscle, ovary, testis, spermatids and spermatozoa. In spermatids, located close to the developing acrosome vesicle. In spermatozoa, found close to the acrosomal region.

It is found in the cytoplasm. The catalysed reaction is alpha-D-glucosamine 6-phosphate + H2O = beta-D-fructose 6-phosphate + NH4(+). Its pathway is nucleotide-sugar biosynthesis; UDP-N-acetyl-alpha-D-glucosamine biosynthesis; alpha-D-glucosamine 6-phosphate from D-fructose 6-phosphate: step 1/1. Allosterically activated by N-acetylglucosamine-6-phosphate (GlcNAc6P). Its function is as follows. Catalyzes the reversible conversion of alpha-D-glucosamine 6-phosphate (GlcN-6P) into beta-D-fructose 6-phosphate (Fru-6P) and ammonium ion, a regulatory reaction step in de novo uridine diphosphate-N-acetyl-alpha-D-glucosamine (UDP-GlcNAc) biosynthesis via hexosamine pathway. Deamination is coupled to aldo-keto isomerization mediating the metabolic flux from UDP-GlcNAc toward Fru-6P. At high ammonium level can drive amination and isomerization of Fru-6P toward hexosamines and UDP-GlcNAc synthesis. Has a role in fine tuning the metabolic fluctuations of cytosolic UDP-GlcNAc and their effects on hyaluronan synthesis that occur during tissue remodeling. Seems to trigger calcium oscillations in mammalian eggs. These oscillations serve as the essential trigger for egg activation and early development of the embryo. The chain is Glucosamine-6-phosphate deaminase 1 from Mus musculus (Mouse).